Here is a 730-residue protein sequence, read N- to C-terminus: Regulatory factor X 4 (730 aa).

A compositionally biased stretch (polar residues) spans 30–41; the sequence is YSSHTSLGNISN. Residues 30-59 form a disordered region; it reads YSSHTSLGNISNDETDEEKENRASKPHSTP. A DNA-binding region (RFX-type winged-helix) is located at residues 61 to 136; that stretch reads TLQWLGENYE…YHYYGIAVKE (76 aa). Residues 500–532 are disordered; the sequence is EPAISTPSPVPFSPAASSSSVEIPSATSPVSNQ. The segment covering 512–528 has biased composition (low complexity); sequence SPAASSSSVEIPSATSP.

It belongs to the RFX family.

It localises to the nucleus. Required for neural tube ciliogenesis during embryogenesis. The polypeptide is Regulatory factor X 4 (Xenopus laevis (African clawed frog)).